The primary structure comprises 592 residues: Aspartate--tRNA ligase (592 aa).

E180 contacts L-aspartate. Residues 204 to 207 (QLFK) are aspartate. Residue R226 participates in L-aspartate binding. ATP contacts are provided by residues 226 to 228 (RDE) and Q235. L-aspartate is bound at residue H455. E489 contributes to the ATP binding site. R496 contacts L-aspartate. 541–544 (GFDR) provides a ligand contact to ATP.

Belongs to the class-II aminoacyl-tRNA synthetase family. Type 1 subfamily. In terms of assembly, homodimer.

The protein resides in the cytoplasm. It catalyses the reaction tRNA(Asp) + L-aspartate + ATP = L-aspartyl-tRNA(Asp) + AMP + diphosphate. Catalyzes the attachment of L-aspartate to tRNA(Asp) in a two-step reaction: L-aspartate is first activated by ATP to form Asp-AMP and then transferred to the acceptor end of tRNA(Asp). This is Aspartate--tRNA ligase from Clostridium tetani (strain Massachusetts / E88).